The sequence spans 319 residues: Annexin A4 (319 aa).

Thr7 is modified (phosphothreonine). Position 12 is a phosphoserine (Ser12). Annexin repeat units lie at residues 14–85 (FNAT…GLMT), 86–157 (PTVL…SLSA), 169–241 (ALMK…AIVK), and 245–316 (SKPS…VLCG). An N6-acetyllysine mark is found at Lys213, Lys293, and Lys300.

This sequence belongs to the annexin family.

It is found in the zymogen granule membrane. Functionally, calcium/phospholipid-binding protein which promotes membrane fusion and is involved in exocytosis. The chain is Annexin A4 (Anxa4) from Mus musculus (Mouse).